The primary structure comprises 352 residues: Maleylacetate reductase (352 aa).

The protein belongs to the iron-containing alcohol dehydrogenase family.

The catalysed reaction is 3-oxoadipate + NAD(+) = maleylacetate + NADH + H(+). It catalyses the reaction 3-oxoadipate + NADP(+) = maleylacetate + NADPH + H(+). Its pathway is aromatic compound metabolism; 3-chlorocatechol degradation. The chain is Maleylacetate reductase (tcbF) from Pseudomonas sp. (strain P51).